A 321-amino-acid chain; its full sequence is Putrescine export system permease protein SapB (321 aa).

The Cytoplasmic segment spans residues 1–8 (MIIFTLRR). The helical transmembrane segment at 9–29 (ILLLIVTLFLLTFVGFSLSYF) threads the bilayer. The Periplasmic portion of the chain corresponds to 30-80 (TPHAPLQGASLWNAWVFWFNGLIHWDFGVSSINGQPIAEQLKEVFPATMEL). Residues 74-302 (FPATMELCIL…SLVIIVNVIS (229 aa)) form the ABC transmembrane type-1 domain. A helical membrane pass occupies residues 81-101 (CILAFGFALIVGIPVGMIAGI). The Cytoplasmic portion of the chain corresponds to 102-112 (TRHKWQDNLIN). The chain crosses the membrane as a helical span at residues 113-133 (AIALLGFSIPVFWLALLLTLF). The Periplasmic portion of the chain corresponds to 134–174 (CSLTLGWLPVSGRFDLLYEVKPITGFALIDAWLSDSPWRDE). The helical transmembrane segment at 175-195 (MIMSAIRHMILPVITLSVAPT) threads the bilayer. Residues 196–248 (TEVIRLMRISTIEVYDQNYVKAAATRGLSRFTILRRHVLHNALPPVIPRLGLQ) lie on the Cytoplasmic side of the membrane. A helical membrane pass occupies residues 249–269 (FSTMLTLAMITEMVFSWPGLG). Residues 270-280 (RWLINAIRQQD) are Periplasmic-facing. The helical transmembrane segment at 281–301 (YAAISAGVMVCGSLVIIVNVI) threads the bilayer. At 302-321 (SDILGAMANPLKHKEWYALR) the chain is on the cytoplasmic side.

The protein belongs to the binding-protein-dependent transport system permease family. OppBC subfamily.

The protein localises to the cell inner membrane. Part of a putrescine export transport system, does not play a role in resistance to antimicrobial peptides. This chain is Putrescine export system permease protein SapB (sapB), found in Escherichia coli (strain K12).